The sequence spans 478 residues: Zinc metalloproteinase/disintegrin (478 aa).

An N-terminal signal peptide occupies residues Met-1–Ser-20. A propeptide spanning residues Ile-21–Leu-187 is cleaved from the precursor. Residues Arg-193–Pro-389 form the Peptidase M12B domain. Intrachain disulfides connect Cys-304–Cys-384, Cys-344–Cys-368, and Cys-346–Cys-351. His-329 lines the Zn(2+) pocket. Glu-330 is an active-site residue. His-333 and His-339 together coordinate Zn(2+). Residues Leu-390 to Ala-407 constitute a propeptide that is removed on maturation. One can recognise a Disintegrin domain in the interval Thr-397–Gly-478. Cystine bridges form between Cys-411/Cys-426, Cys-413/Cys-421, Cys-420/Cys-443, Cys-434/Cys-440, Cys-439/Cys-464, and Cys-452/Cys-471. The short motif at Met-456–Asp-458 is the Cell attachment site; atypical (MVD) element.

Belongs to the venom metalloproteinase (M12B) family. P-II subfamily. P-IIa sub-subfamily. In terms of assembly, monomer (disintegrin). Zn(2+) serves as cofactor. As to expression, expressed by the venom gland.

Its subcellular location is the secreted. The catalysed reaction is Cleavage of 3-Asn-|-Gln-4, 9-Ser-|-His-10 and 14-Ala-|-Leu-15 bonds in insulin B chain and 14-Tyr-|-Gln-15 and 8-Thr-|-Ser-9 in A chain. Cleaves type IV collagen at 73-Ala-|-Gln-74 in alpha1-(IV) and at 7-Gly-|-Leu-8 in alpha2-(IV).. Snake venom zinc metalloproteinase that causes hemorrhage by provoking the degradation of the sub-endothelial matrix proteins (fibronectin, laminin, type IV collagen, nidogen, and gelatins). Functionally, potent inhibitor of both collagen- (IC(50)=4 nM) and ADP-induced (IC(50)=8 nM) platelet aggregation. May act by binding to the platelet receptor GPIIb/GPIIIa (ITGA2B/ITGB3). This is Zinc metalloproteinase/disintegrin from Crotalus atrox (Western diamondback rattlesnake).